We begin with the raw amino-acid sequence, 223 residues long: Ribosomal RNA small subunit methyltransferase Nep1 (223 aa).

S-adenosyl-L-methionine contacts are provided by residues G181, G186, and 199–204 (LYREPL).

This sequence belongs to the class IV-like SAM-binding methyltransferase superfamily. RNA methyltransferase NEP1 family. As to quaternary structure, homodimer.

It carries out the reaction a pseudouridine in rRNA + S-adenosyl-L-methionine = an N(1)-methylpseudouridine in rRNA + S-adenosyl-L-homocysteine + H(+). Methyltransferase involved in ribosomal biogenesis. Specifically catalyzes the N1-methylation of the pseudouridine corresponding to position 914 in M.jannaschii 16S rRNA. The polypeptide is Ribosomal RNA small subunit methyltransferase Nep1 (Pyrococcus furiosus (strain ATCC 43587 / DSM 3638 / JCM 8422 / Vc1)).